The primary structure comprises 584 residues: uncharacterized protein (584 aa).

This is an uncharacterized protein from Magallana gigas (Pacific oyster).